A 342-amino-acid polypeptide reads, in one-letter code: N-acetyl-gamma-glutamyl-phosphate reductase (342 aa).

Residue Cys-146 is part of the active site.

It belongs to the NAGSA dehydrogenase family. Type 1 subfamily.

It is found in the cytoplasm. The enzyme catalyses N-acetyl-L-glutamate 5-semialdehyde + phosphate + NADP(+) = N-acetyl-L-glutamyl 5-phosphate + NADPH + H(+). It functions in the pathway amino-acid biosynthesis; L-arginine biosynthesis; N(2)-acetyl-L-ornithine from L-glutamate: step 3/4. Its function is as follows. Catalyzes the NADPH-dependent reduction of N-acetyl-5-glutamyl phosphate to yield N-acetyl-L-glutamate 5-semialdehyde. The sequence is that of N-acetyl-gamma-glutamyl-phosphate reductase from Frankia casuarinae (strain DSM 45818 / CECT 9043 / HFP020203 / CcI3).